The sequence spans 102 residues: Small ribosomal subunit protein uS10 (102 aa).

This sequence belongs to the universal ribosomal protein uS10 family. Part of the 30S ribosomal subunit.

Functionally, involved in the binding of tRNA to the ribosomes. The protein is Small ribosomal subunit protein uS10 of Chelativorans sp. (strain BNC1).